A 165-amino-acid chain; its full sequence is UBA-like domain-containing protein 2-B (165 aa).

The interval 119–165 (QQPVWLPPASPTAHLHHHHHHPQPVWPPNSQPTGGPQKAMAAMDGQR) is disordered.

Belongs to the UBALD family.

This Xenopus laevis (African clawed frog) protein is UBA-like domain-containing protein 2-B (ubald2-b).